The primary structure comprises 202 residues: MPGQQRRGGGSGGSDRRERRDRSGSGPAQEKNAYVERVVAINRVAKVVKGGRRFSFTALVVVGDADGTVGVGYGKAKEVPAAIAKGVEEAKKHFFKVPRIGSTIPHPVQGEEAAGVVLLKPASPGTGVIAGGPVRAVLECAGVHDVLSKSLGSSNPINIVHATVAALRGLMRPEEIAARRGLPLEDVAPPAMLRARAAGASV.

The span at 1 to 13 (MPGQQRRGGGSGG) shows a compositional bias: gly residues. The tract at residues 1 to 31 (MPGQQRRGGGSGGSDRRERRDRSGSGPAQEK) is disordered. A compositionally biased stretch (basic and acidic residues) spans 14 to 23 (SDRRERRDRS). An S5 DRBM domain is found at 34-97 (YVERVVAINR…EEAKKHFFKV (64 aa)).

The protein belongs to the universal ribosomal protein uS5 family. In terms of assembly, part of the 30S ribosomal subunit. Contacts proteins S4 and S8.

Functionally, with S4 and S12 plays an important role in translational accuracy. Located at the back of the 30S subunit body where it stabilizes the conformation of the head with respect to the body. The polypeptide is Small ribosomal subunit protein uS5 (Frankia casuarinae (strain DSM 45818 / CECT 9043 / HFP020203 / CcI3)).